The sequence spans 491 residues: Ligand-gated ion channel 50 (491 aa).

A signal peptide spans 1-19 (MRFLLVLQLVFFYFSAATT). 2 N-linked (GlcNAc...) asparagine glycosylation sites follow: asparagine 55 and asparagine 101. Residues cysteine 157 and cysteine 171 are joined by a disulfide bond. A run of 3 helical transmembrane segments spans residues 241-261 (LFQS…GFFF), 265-287 (SVSA…FGNV), and 302-322 (VWMI…AIVC). N-linked (GlcNAc...) asparagine glycosylation occurs at asparagine 418. The helical transmembrane segment at 465 to 485 (MIMFPLSFLIFNVVYWSIYFM) threads the bilayer.

The protein belongs to the ligand-gated ion channel (TC 1.A.9) family.

It localises to the postsynaptic cell membrane. It is found in the cell membrane. The chain is Ligand-gated ion channel 50 (lgc-50) from Caenorhabditis elegans.